A 111-amino-acid chain; its full sequence is MIWLTLVFASLLSVAGQLCQKQATCFVAINKRRKHIVLWLGLALACLGLAMVLWLLVLQNVPVGIAYPMLSLNFVWVTLAAVKLWHEPVSPRHWCGVAFIIGGIVILGSTV.

Residues 1-35 are Cytoplasmic-facing; the sequence is MIWLTLVFASLLSVAGQLCQKQATCFVAINKRRKH. A helical membrane pass occupies residues 36–56; the sequence is IVLWLGLALACLGLAMVLWLL. Positions 40–109 constitute an EamA domain; it reads LGLALACLGL…IIGGIVILGS (70 aa). Over 57–60 the chain is Periplasmic; the sequence is VLQN. A helical membrane pass occupies residues 61–81; that stretch reads VPVGIAYPMLSLNFVWVTLAA. Residues 82 to 87 lie on the Cytoplasmic side of the membrane; that stretch reads VKLWHE. The chain crosses the membrane as a helical span at residues 88–108; it reads PVSPRHWCGVAFIIGGIVILG. Topologically, residues 109–111 are periplasmic; it reads STV.

Belongs to the ArnE family. Heterodimer of ArnE and ArnF.

Its subcellular location is the cell inner membrane. Its pathway is bacterial outer membrane biogenesis; lipopolysaccharide biosynthesis. In terms of biological role, translocates 4-amino-4-deoxy-L-arabinose-phosphoundecaprenol (alpha-L-Ara4N-phosphoundecaprenol) from the cytoplasmic to the periplasmic side of the inner membrane. In Escherichia coli (strain ATCC 8739 / DSM 1576 / NBRC 3972 / NCIMB 8545 / WDCM 00012 / Crooks), this protein is Probable 4-amino-4-deoxy-L-arabinose-phosphoundecaprenol flippase subunit ArnE.